The chain runs to 179 residues: MRRRTNIAKQDNRKPMMNGAIRAREVRLIGAEGEQLGVTPTSEALMQAENLNMDLVLISNQEPPVAKIMDYTKFMFEQKKKQKEAKKKQAVVSVKEVRLSPVIDQNDFDTKLRQAIKFLEKGDKVKVSIRFKGRMITHQDVGRQVMDKFAQATKEVAVVEQRAKMDGRQMFLQLAPIKK.

Belongs to the IF-3 family. In terms of assembly, monomer.

Its subcellular location is the cytoplasm. Its function is as follows. IF-3 binds to the 30S ribosomal subunit and shifts the equilibrium between 70S ribosomes and their 50S and 30S subunits in favor of the free subunits, thus enhancing the availability of 30S subunits on which protein synthesis initiation begins. The sequence is that of Translation initiation factor IF-3 from Lactococcus lactis subsp. lactis (strain IL1403) (Streptococcus lactis).